Consider the following 394-residue polypeptide: Chorismate synthase (394 aa).

Residues arginine 40 and arginine 46 each contribute to the NADP(+) site. FMN is bound by residues 135–137 (RAS), 255–256 (QA), glycine 302, 317–321 (KPISS), and arginine 343.

It belongs to the chorismate synthase family. In terms of assembly, homotetramer. Requires FMNH2 as cofactor.

It carries out the reaction 5-O-(1-carboxyvinyl)-3-phosphoshikimate = chorismate + phosphate. It participates in metabolic intermediate biosynthesis; chorismate biosynthesis; chorismate from D-erythrose 4-phosphate and phosphoenolpyruvate: step 7/7. Functionally, catalyzes the anti-1,4-elimination of the C-3 phosphate and the C-6 proR hydrogen from 5-enolpyruvylshikimate-3-phosphate (EPSP) to yield chorismate, which is the branch point compound that serves as the starting substrate for the three terminal pathways of aromatic amino acid biosynthesis. This reaction introduces a second double bond into the aromatic ring system. The sequence is that of Chorismate synthase from Parafrankia sp. (strain EAN1pec).